The chain runs to 191 residues: Large ribosomal subunit protein uL5 (191 aa).

This sequence belongs to the universal ribosomal protein uL5 family. In terms of assembly, part of the 50S ribosomal subunit; part of the 5S rRNA/L5/L18/L25 subcomplex. Contacts the 5S rRNA and the P site tRNA. Forms a bridge to the 30S subunit in the 70S ribosome.

In terms of biological role, this is one of the proteins that bind and probably mediate the attachment of the 5S RNA into the large ribosomal subunit, where it forms part of the central protuberance. In the 70S ribosome it contacts protein S13 of the 30S subunit (bridge B1b), connecting the 2 subunits; this bridge is implicated in subunit movement. Contacts the P site tRNA; the 5S rRNA and some of its associated proteins might help stabilize positioning of ribosome-bound tRNAs. This is Large ribosomal subunit protein uL5 from Salinibacter ruber (strain DSM 13855 / M31).